Reading from the N-terminus, the 95-residue chain is Small ribosomal subunit protein bS6 (95 aa).

Belongs to the bacterial ribosomal protein bS6 family.

In terms of biological role, binds together with bS18 to 16S ribosomal RNA. The protein is Small ribosomal subunit protein bS6 of Corynebacterium glutamicum (strain ATCC 13032 / DSM 20300 / JCM 1318 / BCRC 11384 / CCUG 27702 / LMG 3730 / NBRC 12168 / NCIMB 10025 / NRRL B-2784 / 534).